The sequence spans 690 residues: Methionine--tRNA ligase (690 aa).

A 'HIGH' region motif is present at residues 20–30; the sequence is PYANGSIHLGH. Residues Cys151, Cys154, Cys164, and Cys167 each contribute to the Zn(2+) site. A 'KMSKS' region motif is present at residues 337–341; sequence KMSKS. Lys340 lines the ATP pocket. The tRNA-binding domain occupies 589-690; sequence DFAKVDLRIA…EGAQPGMRVM (102 aa).

It belongs to the class-I aminoacyl-tRNA synthetase family. MetG type 1 subfamily. Homodimer. Zn(2+) is required as a cofactor.

The protein resides in the cytoplasm. The catalysed reaction is tRNA(Met) + L-methionine + ATP = L-methionyl-tRNA(Met) + AMP + diphosphate. In terms of biological role, is required not only for elongation of protein synthesis but also for the initiation of all mRNA translation through initiator tRNA(fMet) aminoacylation. The polypeptide is Methionine--tRNA ligase (Vibrio vulnificus (strain CMCP6)).